The chain runs to 493 residues: Glutamyl-tRNA(Gln) amidotransferase subunit A (493 aa).

Residues K79 and S159 each act as charge relay system in the active site. The active-site Acyl-ester intermediate is S183.

Belongs to the amidase family. GatA subfamily. In terms of assembly, heterotrimer of A, B and C subunits.

It catalyses the reaction L-glutamyl-tRNA(Gln) + L-glutamine + ATP + H2O = L-glutaminyl-tRNA(Gln) + L-glutamate + ADP + phosphate + H(+). In terms of biological role, allows the formation of correctly charged Gln-tRNA(Gln) through the transamidation of misacylated Glu-tRNA(Gln) in organisms which lack glutaminyl-tRNA synthetase. The reaction takes place in the presence of glutamine and ATP through an activated gamma-phospho-Glu-tRNA(Gln). In Sinorhizobium medicae (strain WSM419) (Ensifer medicae), this protein is Glutamyl-tRNA(Gln) amidotransferase subunit A.